A 629-amino-acid polypeptide reads, in one-letter code: tRNA uridine 5-carboxymethylaminomethyl modification enzyme MnmG (629 aa).

FAD-binding positions include 13-18 (GGGHAG), Val-125, and Ser-180. 273 to 287 (GPRYCPSIEDKVMRF) provides a ligand contact to NAD(+). Residue Gln-370 participates in FAD binding.

The protein belongs to the MnmG family. In terms of assembly, homodimer. Heterotetramer of two MnmE and two MnmG subunits. FAD serves as cofactor.

Its subcellular location is the cytoplasm. Functionally, NAD-binding protein involved in the addition of a carboxymethylaminomethyl (cmnm) group at the wobble position (U34) of certain tRNAs, forming tRNA-cmnm(5)s(2)U34. The polypeptide is tRNA uridine 5-carboxymethylaminomethyl modification enzyme MnmG (Escherichia coli O45:K1 (strain S88 / ExPEC)).